We begin with the raw amino-acid sequence, 434 residues long: Protein maelstrom homolog (434 aa).

Positions 4 to 73 (RRGSRNAYYF…AQGKDAGPWE (70 aa)) form a DNA-binding region, HMG box. The tract at residues 357-387 (SHFSSSNQEQRSNTPTGDYPSGVKISGQSSS) is disordered. The segment covering 363-372 (NQEQRSNTPT) has biased composition (polar residues).

This sequence belongs to the maelstrom family. In terms of assembly, interacts with SMARCB1, SIN3B and DDX4. Interacts with piRNA-associated proteins TDRD1, PIWIL1 and PIWIL2. Interacts with TEX19.

It is found in the cytoplasm. Its subcellular location is the nucleus. Plays a central role during spermatogenesis by repressing transposable elements and preventing their mobilization, which is essential for the germline integrity. Acts via the piRNA metabolic process, which mediates the repression of transposable elements during meiosis by forming complexes composed of piRNAs and Piwi proteins and governs the methylation and subsequent repression of transposons. Its association with piP-bodies suggests a participation in the secondary piRNAs metabolic process. Required for the localization of germ-cell factors to the meiotic nuage. The sequence is that of Protein maelstrom homolog (MAEL) from Sus scrofa (Pig).